Consider the following 262-residue polypeptide: Ribosomal RNA small subunit methyltransferase A (262 aa).

S-adenosyl-L-methionine is bound by residues N20, L22, G47, E68, D90, and N110.

It belongs to the class I-like SAM-binding methyltransferase superfamily. rRNA adenine N(6)-methyltransferase family. RsmA subfamily.

It is found in the cytoplasm. The enzyme catalyses adenosine(1518)/adenosine(1519) in 16S rRNA + 4 S-adenosyl-L-methionine = N(6)-dimethyladenosine(1518)/N(6)-dimethyladenosine(1519) in 16S rRNA + 4 S-adenosyl-L-homocysteine + 4 H(+). Functionally, specifically dimethylates two adjacent adenosines (A1518 and A1519) in the loop of a conserved hairpin near the 3'-end of 16S rRNA in the 30S particle. May play a critical role in biogenesis of 30S subunits. The chain is Ribosomal RNA small subunit methyltransferase A from Chlorobium phaeobacteroides (strain BS1).